Reading from the N-terminus, the 601-residue chain is ATP-dependent lipid A-core flippase (601 aa).

4 helical membrane passes run 26–46, 82–102, 167–187, and 263–283; these read VGLF…QPML, LMIV…NYFL, VFLF…MVAI, and VYTP…LFLV. One can recognise an ABC transmembrane type-1 domain in the interval 30-321; that stretch reads AVSILGYVIF…LSEVSSTIQR (292 aa). The ABC transporter domain occupies 353–589; it reads IEVRDLSFRY…GGHYARLHAM (237 aa). ATP is bound at residue 387–394; the sequence is GRSGSGKS.

The protein belongs to the ABC transporter superfamily. Lipid exporter (TC 3.A.1.106) family. Homodimer.

The protein resides in the cell inner membrane. The enzyme catalyses ATP + H2O + lipid A-core oligosaccharideSide 1 = ADP + phosphate + lipid A-core oligosaccharideSide 2.. Functionally, involved in lipopolysaccharide (LPS) biosynthesis. Translocates lipid A-core from the inner to the outer leaflet of the inner membrane. Transmembrane domains (TMD) form a pore in the inner membrane and the ATP-binding domain (NBD) is responsible for energy generation. The protein is ATP-dependent lipid A-core flippase of Aromatoleum aromaticum (strain DSM 19018 / LMG 30748 / EbN1) (Azoarcus sp. (strain EbN1)).